We begin with the raw amino-acid sequence, 335 residues long: Glucokinase (335 aa).

11–16 is an ATP binding site; the sequence is ADIGGT.

It belongs to the bacterial glucokinase family.

Its subcellular location is the cytoplasm. It catalyses the reaction D-glucose + ATP = D-glucose 6-phosphate + ADP + H(+). This chain is Glucokinase, found in Stenotrophomonas maltophilia (strain K279a).